Consider the following 303-residue polypeptide: Regulatory protein PocR (303 aa).

An HTH araC/xylS-type domain is found at 195–293; sequence KKALRYIDAH…QVTPQAYRQQ (99 aa). DNA-binding regions (H-T-H motif) lie at residues 212–233 and 260–283; these read EDVA…KKYQ and IASI…RQTY.

It functions in the pathway cofactor biosynthesis; adenosylcobalamin biosynthesis [regulation]. Its pathway is polyol metabolism; 1,2-propanediol degradation [regulation]. Functionally, positive regulatory protein of pdu and cob operons. Positively autoregulates its own expression. The protein is Regulatory protein PocR (pocR) of Salmonella typhimurium (strain LT2 / SGSC1412 / ATCC 700720).